The chain runs to 227 residues: A-type potassium channel modulatory protein KCNIP1 (227 aa).

One can recognise an EF-hand 1; degenerate domain in the interval 38–94 (LEMTMVCHRPEGLEQLEAQTNFTKRELQVLYRGFKNECPSGVVNEDTFKQIYAQFFP). 3 consecutive EF-hand domains span residues 97-132 (DASTYAHYLFNAFDTTQTGSVKFEDFVTALSILLRG), 133-168 (TVHEKLRWTFNLYDINKDGYINKEEMMDIVKAIYDM), and 181-216 (TPRQHVDVFFQKMDKNKDGIVTLDEFLESCQEDDNI). Residues D146, N148, D150, Y152, E157, D194, N196, D198, and E205 each coordinate Ca(2+). Residues 214–227 (DNIMRSLQLFQNVM) form an interaction with KCND2 region.

The protein belongs to the recoverin family. As to quaternary structure, component of heteromultimeric potassium channels. Identified in potassium channel complexes containing KCND1, KCND2, KCND3, KCNIP1, KCNIP2, KCNIP3, KCNIP4, DPP6 and DPP10. Part of a heterooctamer composed of the tetrameric channel and four KCNIP1 chains. Probably part of a complex consisting of KCNIP1, KCNIP2 isoform 3 and KCND2. Self-associates to form homodimers and homotetramers. Interacts with KCNIP2 isoform 3 in a calcium-dependent manner. Interacts with Naja atra venom CTX3. Interacts with KCND2; this interaction mediates the capture of both the N- and C-terminus of KCND2, thus preventing KCND2 N-type inactivation and modulates the channel gating kinetics. Interacts with KCND3; each KCNIP1 monomer interacts with two adjacent KCND3 subunits, through both the N-terminal inactivation ball of a KCND3 subunit and a C-terminal helix from the adjacent KCND3 subunit, clamping them together; this interaction stabilizes the tetrameric form and modulates the channel gating kinetics namely channel activation and inactivation kinetics and rate of recovery from inactivation. As to expression, isoform 1 and isoform 2 are expressed in brain and kidney. Isoform 1 is also expressed in liver, pancreas, skeletal muscle, small intestine and testis. Isoform 2 is also expressed in lung, pancreas, leukocytes, prostate and thymus.

The protein resides in the cell membrane. It localises to the cytoplasm. It is found in the cell projection. Its subcellular location is the dendrite. Functionally, regulatory subunit of Kv4/D (Shal)-type voltage-gated rapidly inactivating A-type potassium channels. Regulates channel density, inactivation kinetics and rate of recovery from inactivation in a calcium-dependent and isoform-specific manner. In vitro, modulates KCND1/Kv4.1 and KCND2/Kv4.2 currents. Increases the presence of KCND2 at the cell surface. This Homo sapiens (Human) protein is A-type potassium channel modulatory protein KCNIP1.